Here is a 505-residue protein sequence, read N- to C-terminus: Apolipoprotein N-acyltransferase (505 aa).

6 consecutive transmembrane segments (helical) span residues 15-46 (AAFV…LLLL), 55-75 (ALIA…WVHV), 89-109 (LFLM…FGWL), 129-149 (LWLI…WLWL), 161-181 (FAPI…AGSL), and 192-212 (MACI…MQWV). One can recognise a CN hydrolase domain in the interval 225–471 (IQGNIEQGLK…TGVLKATVTP (247 aa)). Catalysis depends on glutamate 264, which acts as the Proton acceptor. Lysine 330 is a catalytic residue. Cysteine 382 functions as the Nucleophile in the catalytic mechanism. The helical transmembrane segment at 479–499 (FLWGTTPLYLWVGLAAGFAFW) threads the bilayer.

This sequence belongs to the CN hydrolase family. Apolipoprotein N-acyltransferase subfamily.

It localises to the cell inner membrane. It carries out the reaction N-terminal S-1,2-diacyl-sn-glyceryl-L-cysteinyl-[lipoprotein] + a glycerophospholipid = N-acyl-S-1,2-diacyl-sn-glyceryl-L-cysteinyl-[lipoprotein] + a 2-acyl-sn-glycero-3-phospholipid + H(+). Its pathway is protein modification; lipoprotein biosynthesis (N-acyl transfer). Functionally, catalyzes the phospholipid dependent N-acylation of the N-terminal cysteine of apolipoprotein, the last step in lipoprotein maturation. This Vibrio cholerae serotype O1 (strain ATCC 39315 / El Tor Inaba N16961) protein is Apolipoprotein N-acyltransferase.